Here is a 162-residue protein sequence, read N- to C-terminus: uncharacterized protein (162 aa).

This is an uncharacterized protein from Salmonella typhi.